The following is a 151-amino-acid chain: Ubiquitin-conjugating enzyme E2 2 (151 aa).

The UBC core domain occupies Ala4–Glu150. Cys88 serves as the catalytic Glycyl thioester intermediate.

This sequence belongs to the ubiquitin-conjugating enzyme family.

Its subcellular location is the cytoplasm. The protein resides in the nucleus. The enzyme catalyses S-ubiquitinyl-[E1 ubiquitin-activating enzyme]-L-cysteine + [E2 ubiquitin-conjugating enzyme]-L-cysteine = [E1 ubiquitin-activating enzyme]-L-cysteine + S-ubiquitinyl-[E2 ubiquitin-conjugating enzyme]-L-cysteine.. The protein operates within protein modification; protein ubiquitination. Its function is as follows. Catalyzes the covalent attachment of ubiquitin to other proteins. Plays a role in transcription regulation by catalyzing the monoubiquitination of histone H2B to form H2BK123ub1. H2BK123ub1 gives a specific tag for epigenetic transcriptional activation and is also a prerequisite for H3K4me and H3K79me formation. Also involved in postreplication repair of UV-damaged DNA, in N-end rule-dependent protein degradation and in sporulation. This Fusarium solani (Filamentous fungus) protein is Ubiquitin-conjugating enzyme E2 2 (UBC2).